The following is a 160-amino-acid chain: MSNVISVGMADLKTTKAPNILMTAGLGSCIGICVHDPIQKVGGMAHIMLPTAGSAPGGNPAKYADTAMDLLVTEILRLGASKSRLRAKMAGGAQMFSFPGKPPVLKIGDRNAEQVIVELKRLGIPLLVSDVGGSFGRTIHFDVGTGDLKVRTINHGEKVI.

The protein belongs to the CheD family.

The catalysed reaction is L-glutaminyl-[protein] + H2O = L-glutamyl-[protein] + NH4(+). In terms of biological role, probably deamidates glutamine residues to glutamate on methyl-accepting chemotaxis receptors (MCPs), playing an important role in chemotaxis. This chain is Probable chemoreceptor glutamine deamidase CheD, found in Desulfitobacterium hafniense (strain DSM 10664 / DCB-2).